The sequence spans 81 residues: Photosystem I iron-sulfur center (81 aa).

4Fe-4S ferredoxin-type domains lie at 1-31 (MSHS…MVPW) and 39-68 (IASS…IRVY). 8 residues coordinate [4Fe-4S] cluster: Cys11, Cys14, Cys17, Cys21, Cys48, Cys51, Cys54, and Cys58.

In terms of assembly, the cyanobacterial PSI reaction center is composed of one copy each of PsaA,B,C,D,E,F,I,J,K,L,M and X, and forms trimeric complexes. The cofactor is [4Fe-4S] cluster.

It is found in the cellular thylakoid membrane. It carries out the reaction reduced [plastocyanin] + hnu + oxidized [2Fe-2S]-[ferredoxin] = oxidized [plastocyanin] + reduced [2Fe-2S]-[ferredoxin]. Its function is as follows. Apoprotein for the two 4Fe-4S centers FA and FB of photosystem I (PSI); essential for photochemical activity. FB is the terminal electron acceptor of PSI, donating electrons to ferredoxin. The C-terminus interacts with PsaA/B/D and helps assemble the protein into the PSI complex. Required for binding of PsaD and PsaE to PSI. PSI is a plastocyanin/cytochrome c6-ferredoxin oxidoreductase, converting photonic excitation into a charge separation, which transfers an electron from the donor P700 chlorophyll pair to the spectroscopically characterized acceptors A0, A1, FX, FA and FB in turn. In Microcystis aeruginosa (strain NIES-843 / IAM M-2473), this protein is Photosystem I iron-sulfur center.